A 464-amino-acid polypeptide reads, in one-letter code: Phospho-2-dehydro-3-deoxyheptonate aldolase AroG (464 aa).

Cys87 serves as a coordination point for Mn(2+). Phosphoenolpyruvate is bound by residues Arg126, 285–286 (ER), Lys308, and Arg339. Mn(2+) is bound by residues His371, Glu413, and Asp443.

It belongs to the class-II DAHP synthase family. Homodimer. Probably interacts with MSMEG_5536. The cofactor is Mn(2+). It depends on Co(2+) as a cofactor. Cd(2+) serves as cofactor.

The enzyme catalyses D-erythrose 4-phosphate + phosphoenolpyruvate + H2O = 7-phospho-2-dehydro-3-deoxy-D-arabino-heptonate + phosphate. The protein operates within metabolic intermediate biosynthesis; chorismate biosynthesis; chorismate from D-erythrose 4-phosphate and phosphoenolpyruvate: step 1/7. In terms of biological role, catalyzes an aldol-like condensation reaction between phosphoenolpyruvate (PEP) and D-erythrose 4-phosphate (E4P) to generate 3-deoxy-D-arabino-heptulosonate 7-phosphate (DAH7P) and inorganic phosphate. This is Phospho-2-dehydro-3-deoxyheptonate aldolase AroG (aroG) from Mycolicibacterium smegmatis (strain ATCC 700084 / mc(2)155) (Mycobacterium smegmatis).